Consider the following 277-residue polypeptide: Energy-coupling factor transporter ATP-binding protein EcfA1 (277 aa).

An ABC transporter domain is found at 5 to 240; it reads LEVENLVFKY…SEDMVEIGLD (236 aa). 40–47 is a binding site for ATP; that stretch reads GQNGSGKS.

This sequence belongs to the ABC transporter superfamily. Energy-coupling factor EcfA family. In terms of assembly, forms a stable energy-coupling factor (ECF) transporter complex composed of 2 membrane-embedded substrate-binding proteins (S component), 2 ATP-binding proteins (A component) and 2 transmembrane proteins (T component).

The protein localises to the cell membrane. ATP-binding (A) component of a common energy-coupling factor (ECF) ABC-transporter complex. Unlike classic ABC transporters this ECF transporter provides the energy necessary to transport a number of different substrates. In Lactococcus lactis subsp. lactis (strain IL1403) (Streptococcus lactis), this protein is Energy-coupling factor transporter ATP-binding protein EcfA1.